The following is a 291-amino-acid chain: Probable S-adenosylmethionine-dependent methyltransferase CRG1 (291 aa).

Belongs to the methyltransferase superfamily.

The protein resides in the cytoplasm. Its function is as follows. Probable S-adenosylmethionine-dependent methyltransferase which mediates cantharidin resistance. The chain is Probable S-adenosylmethionine-dependent methyltransferase CRG1 (CRG1) from Saccharomyces cerevisiae (strain ATCC 204508 / S288c) (Baker's yeast).